The primary structure comprises 431 residues: 3-phosphoshikimate 1-carboxyvinyltransferase (431 aa).

Residues K21, S22, and R26 each contribute to the 3-phosphoshikimate site. K21 is a phosphoenolpyruvate binding site. Phosphoenolpyruvate contacts are provided by G93 and R121. 5 residues coordinate 3-phosphoshikimate: S166, Q168, S192, D317, and K344. Phosphoenolpyruvate is bound at residue Q168. The active-site Proton acceptor is D317. R348 and R390 together coordinate phosphoenolpyruvate.

This sequence belongs to the EPSP synthase family. In terms of assembly, monomer.

Its subcellular location is the cytoplasm. It carries out the reaction 3-phosphoshikimate + phosphoenolpyruvate = 5-O-(1-carboxyvinyl)-3-phosphoshikimate + phosphate. Its pathway is metabolic intermediate biosynthesis; chorismate biosynthesis; chorismate from D-erythrose 4-phosphate and phosphoenolpyruvate: step 6/7. Catalyzes the transfer of the enolpyruvyl moiety of phosphoenolpyruvate (PEP) to the 5-hydroxyl of shikimate-3-phosphate (S3P) to produce enolpyruvyl shikimate-3-phosphate and inorganic phosphate. The protein is 3-phosphoshikimate 1-carboxyvinyltransferase of Herpetosiphon aurantiacus (strain ATCC 23779 / DSM 785 / 114-95).